The chain runs to 210 residues: Protein GrpE (210 aa).

The segment at methionine 1–leucine 71 is disordered. Over residues threonine 11–glutamine 23 the composition is skewed to acidic residues. Polar residues predominate over residues asparagine 24–threonine 35. A compositionally biased stretch (low complexity) spans aspartate 36–glutamate 46. A compositionally biased stretch (acidic residues) spans asparagine 47 to serine 60. Over residues glutamine 61–leucine 71 the composition is skewed to basic and acidic residues.

This sequence belongs to the GrpE family. Homodimer.

It is found in the cytoplasm. Its function is as follows. Participates actively in the response to hyperosmotic and heat shock by preventing the aggregation of stress-denatured proteins, in association with DnaK and GrpE. It is the nucleotide exchange factor for DnaK and may function as a thermosensor. Unfolded proteins bind initially to DnaJ; upon interaction with the DnaJ-bound protein, DnaK hydrolyzes its bound ATP, resulting in the formation of a stable complex. GrpE releases ADP from DnaK; ATP binding to DnaK triggers the release of the substrate protein, thus completing the reaction cycle. Several rounds of ATP-dependent interactions between DnaJ, DnaK and GrpE are required for fully efficient folding. The polypeptide is Protein GrpE (Staphylococcus epidermidis (strain ATCC 35984 / DSM 28319 / BCRC 17069 / CCUG 31568 / BM 3577 / RP62A)).